Reading from the N-terminus, the 306-residue chain is Serine/threonine-protein kinase mug51 (306 aa).

This sequence belongs to the STK19 family.

It carries out the reaction L-seryl-[protein] + ATP = O-phospho-L-seryl-[protein] + ADP + H(+). The enzyme catalyses L-threonyl-[protein] + ATP = O-phospho-L-threonyl-[protein] + ADP + H(+). In terms of biological role, serine/threonine-protein kinase. Has a role in meiosis. The polypeptide is Serine/threonine-protein kinase mug51 (mug51) (Schizosaccharomyces pombe (strain 972 / ATCC 24843) (Fission yeast)).